A 152-amino-acid chain; its full sequence is Small ribosomal subunit protein bS6 (152 aa).

Positions 96–152 are disordered; the sequence is HEEGPSAMLQKRDRDDRGPREGGDRGPRREFGDRPPRRDGDFQRGPRPDRAPREDRA.

This sequence belongs to the bacterial ribosomal protein bS6 family.

In terms of biological role, binds together with bS18 to 16S ribosomal RNA. In Rhizobium etli (strain ATCC 51251 / DSM 11541 / JCM 21823 / NBRC 15573 / CFN 42), this protein is Small ribosomal subunit protein bS6.